The sequence spans 363 residues: Protein RecA (363 aa).

Residue 79 to 86 coordinates ATP; it reads GPESSGKT.

Belongs to the RecA family.

The protein resides in the cytoplasm. Functionally, can catalyze the hydrolysis of ATP in the presence of single-stranded DNA, the ATP-dependent uptake of single-stranded DNA by duplex DNA, and the ATP-dependent hybridization of homologous single-stranded DNAs. It interacts with LexA causing its activation and leading to its autocatalytic cleavage. The sequence is that of Protein RecA from Methylobacterium radiotolerans (strain ATCC 27329 / DSM 1819 / JCM 2831 / NBRC 15690 / NCIMB 10815 / 0-1).